Reading from the N-terminus, the 350-residue chain is Protein RecA (350 aa).

Position 65-72 (65-72 (GPESSGKT)) interacts with ATP. Residues 329-350 (ASPDVKANPVKETEDDMADADI) form a disordered region. Positions 341–350 (TEDDMADADI) are enriched in acidic residues.

The protein belongs to the RecA family.

Its subcellular location is the cytoplasm. Its function is as follows. Can catalyze the hydrolysis of ATP in the presence of single-stranded DNA, the ATP-dependent uptake of single-stranded DNA by duplex DNA, and the ATP-dependent hybridization of homologous single-stranded DNAs. It interacts with LexA causing its activation and leading to its autocatalytic cleavage. This chain is Protein RecA, found in Pseudomonas fluorescens (strain ATCC BAA-477 / NRRL B-23932 / Pf-5).